Here is a 71-residue protein sequence, read N- to C-terminus: Small ribosomal subunit protein bS21 (71 aa).

Positions 47-71 (RENATRAKRHAKRVARENARNTRLY) are disordered. Residues 60-71 (VARENARNTRLY) are compositionally biased toward basic and acidic residues.

It belongs to the bacterial ribosomal protein bS21 family.

The protein is Small ribosomal subunit protein bS21 of Actinobacillus succinogenes (strain ATCC 55618 / DSM 22257 / CCUG 43843 / 130Z).